Consider the following 1603-residue polypeptide: Pentafunctional AROM polypeptide (1603 aa).

The tract at residues methionine 1–asparagine 384 is 3-dehydroquinate synthase. NAD(+) is bound by residues aspartate 44–asparagine 46, glutamate 81–lysine 84, glycine 114–valine 116, and aspartate 119. 7-phospho-2-dehydro-3-deoxy-D-arabino-heptonate is bound at residue arginine 130. NAD(+) is bound at residue threonine 139–threonine 140. Residues aspartate 146 and lysine 152 each contribute to the 7-phospho-2-dehydro-3-deoxy-D-arabino-heptonate site. Position 161 (lysine 161) interacts with NAD(+). A 7-phospho-2-dehydro-3-deoxy-D-arabino-heptonate-binding site is contributed by asparagine 162. NAD(+)-binding positions include phenylalanine 179–threonine 182 and asparagine 190. Glutamate 194 serves as a coordination point for Zn(2+). Residues glutamate 194–lysine 197 and lysine 250 each bind 7-phospho-2-dehydro-3-deoxy-D-arabino-heptonate. Glutamate 260 (proton acceptor; for 3-dehydroquinate synthase activity) is an active-site residue. Residues arginine 264–asparagine 268 and histidine 271 contribute to the 7-phospho-2-dehydro-3-deoxy-D-arabino-heptonate site. Histidine 271 lines the Zn(2+) pocket. The active-site Proton acceptor; for 3-dehydroquinate synthase activity is histidine 275. 7-phospho-2-dehydro-3-deoxy-D-arabino-heptonate contacts are provided by histidine 287 and lysine 356. Residue histidine 287 coordinates Zn(2+). An EPSP synthase region spans residues valine 397–valine 842. Cysteine 824 (for EPSP synthase activity) is an active-site residue. The segment at alanine 872–serine 1064 is shikimate kinase. Glycine 879–threonine 886 contributes to the ATP binding site. Residues leucine 1065–glutamate 1285 are 3-dehydroquinase. Histidine 1188 acts as the Proton acceptor; for 3-dehydroquinate dehydratase activity in catalysis. The Schiff-base intermediate with substrate; for 3-dehydroquinate dehydratase activity role is filled by lysine 1216. A shikimate dehydrogenase region spans residues alanine 1298 to serine 1603.

The protein in the N-terminal section; belongs to the sugar phosphate cyclases superfamily. Dehydroquinate synthase family. In the 2nd section; belongs to the EPSP synthase family. It in the 3rd section; belongs to the shikimate kinase family. This sequence in the 4th section; belongs to the type-I 3-dehydroquinase family. The protein in the C-terminal section; belongs to the shikimate dehydrogenase family. As to quaternary structure, homodimer. Requires Zn(2+) as cofactor.

The protein resides in the cytoplasm. The catalysed reaction is 7-phospho-2-dehydro-3-deoxy-D-arabino-heptonate = 3-dehydroquinate + phosphate. The enzyme catalyses 3-dehydroquinate = 3-dehydroshikimate + H2O. It catalyses the reaction shikimate + NADP(+) = 3-dehydroshikimate + NADPH + H(+). It carries out the reaction shikimate + ATP = 3-phosphoshikimate + ADP + H(+). The catalysed reaction is 3-phosphoshikimate + phosphoenolpyruvate = 5-O-(1-carboxyvinyl)-3-phosphoshikimate + phosphate. It participates in metabolic intermediate biosynthesis; chorismate biosynthesis; chorismate from D-erythrose 4-phosphate and phosphoenolpyruvate: step 2/7. Its pathway is metabolic intermediate biosynthesis; chorismate biosynthesis; chorismate from D-erythrose 4-phosphate and phosphoenolpyruvate: step 3/7. The protein operates within metabolic intermediate biosynthesis; chorismate biosynthesis; chorismate from D-erythrose 4-phosphate and phosphoenolpyruvate: step 4/7. It functions in the pathway metabolic intermediate biosynthesis; chorismate biosynthesis; chorismate from D-erythrose 4-phosphate and phosphoenolpyruvate: step 5/7. It participates in metabolic intermediate biosynthesis; chorismate biosynthesis; chorismate from D-erythrose 4-phosphate and phosphoenolpyruvate: step 6/7. Its function is as follows. The AROM polypeptide catalyzes 5 consecutive enzymatic reactions in prechorismate polyaromatic amino acid biosynthesis. This is Pentafunctional AROM polypeptide from Paracoccidioides brasiliensis (strain Pb03).